The sequence spans 432 residues: Non-peptidase homolog YmxG (432 aa).

The first 20 residues, 1 to 20 (MKKFLITLLLGVFMGLQASA), serve as a signal peptide directing secretion.

Belongs to the peptidase M16 family.

It is found in the secreted. May contribute to the full activity of the protease PqqE. This chain is Non-peptidase homolog YmxG, found in Helicobacter pylori (strain ATCC 700392 / 26695) (Campylobacter pylori).